Here is a 107-residue protein sequence, read N- to C-terminus: U1-lycotoxin-Ls1x (107 aa).

A signal peptide spans 1–20 (MMKVLVVVALLVTLISYSSS). The propeptide occupies 21–41 (EGIDDLEADELLSLMANEHPR). Intrachain disulfides connect Cys-44/Cys-59, Cys-51/Cys-68, Cys-58/Cys-86, and Cys-70/Cys-84.

Belongs to the neurotoxin 19 (CSTX) family. 04 (U1-Lctx) subfamily. As to expression, expressed by the venom gland.

It localises to the secreted. The chain is U1-lycotoxin-Ls1x from Lycosa singoriensis (Wolf spider).